A 646-amino-acid polypeptide reads, in one-letter code: RNA-binding protein RMD9, mitochondrial (646 aa).

The transit peptide at 1 to 14 directs the protein to the mitochondrion; the sequence is MMLRRNAVRSLKTM. A propeptide spans 15–51 (removed in mature form); it reads EISVSNVVNSGSIAMLRGKLANVVLSDRTYHSSPIFH. The PPR1 repeat unit spans residues 209 to 238; it reads VSGYGATHLLTSFKELSFDDDCIRIWEASK. Residues 251–282 form a PPR2 repeat; sequence EPKVVGFMLPLLYAKTRSLTEPNELYNQIIQS. The stretch at 288-317 is one PPR3 repeat; the sequence is PNLYSGLIKVFIKAEDYEKALSLFGQLCEK. Residues 323–353 form a PPR4 repeat; sequence YGYLIETHLSFIGDSKNLTLAESFFDKIIND. The PPR5 repeat unit spans residues 363–394; the sequence is VSTVNSFLQNIWKAQNDFDHVYRIWEKAVKFY. A PPR6 repeat occupies 401 to 439; sequence GILSSLNNTFFTIFFENYINDNINGFRKLQEIITFYSGV. Residues 444–473 form a PPR7 repeat; it reads EPFFNVMLTRASIWHERSIIDFIDKNYTLY. Residues 481 to 514 form a PPR8 repeat; the sequence is SYRILLKSLGSIDNTNNEEILDRWLELVKKLNEL.

Belongs to the RMD9 family. Monomer. Phosphorylated. Phosphorylation promotes binding to RNA.

The protein resides in the mitochondrion inner membrane. In terms of biological role, binds the RNA motif 5'-AAUAA[U/C]AUUCUU-3' in the 3'-UTR of mitochondrial mRNAs. Involved in the processing or stability of mitochondrial mRNAs. This Saccharomyces cerevisiae (strain ATCC 204508 / S288c) (Baker's yeast) protein is RNA-binding protein RMD9, mitochondrial.